The chain runs to 630 residues: Transposase B from transposon Tn554 (630 aa).

The 87-residue stretch at 216-302 (TYFKQLVKRY…ILEGLFSTLL (87 aa)) folds into the Core-binding (CB) domain. The Tyr recombinase domain occupies 326–513 (AKPRFIDEFV…FDETLKNEFT (188 aa)). Active-site residues include Arg-363, Lys-391, His-465, Arg-468, and His-491. Tyr-500 acts as the O-(3'-phospho-DNA)-tyrosine intermediate in catalysis.

This sequence belongs to the 'phage' integrase family.

Its function is as follows. One of three proteins encoded by transposon Tn554 required for its transposition. The chain is Transposase B from transposon Tn554 (tnpB1) from Staphylococcus aureus (strain Mu50 / ATCC 700699).